Reading from the N-terminus, the 188-residue chain is Probable manganese efflux pump MntP (188 aa).

Helical transmembrane passes span 3-23 (ITAT…ASVG), 66-86 (LEWN…RMII), 106-128 (WLLV…GLAF), 143-163 (ATLI…SIIG), and 168-188 (ILGG…HFHG).

The protein belongs to the MntP (TC 9.B.29) family.

Its subcellular location is the cell inner membrane. In terms of biological role, probably functions as a manganese efflux pump. This is Probable manganese efflux pump MntP from Shigella sonnei (strain Ss046).